The primary structure comprises 275 residues: Mitochondrial prohibitin complex protein 1 (275 aa).

Residues Arg-180 to Ala-213 are a coiled coil.

It belongs to the prohibitin family. In terms of assembly, high molecular weight complex that consist of phb-1 and phb-2.

It is found in the mitochondrion inner membrane. In terms of biological role, PHB proteins are essential during embryonic development and are required for somatic and germline differentiation in the larval gonad. A deficiency in PHB proteins results in altered mitochondrial biogenesis in body wall muscle cells. The protein is Mitochondrial prohibitin complex protein 1 (phb-1) of Caenorhabditis elegans.